The sequence spans 1010 residues: MAGNDCGALLDEELSSFFLNYLSDTQGGESGEEQLCADLPELDLSQLDASDFDSATCFGELQWCPETSETEPSQYSPDDSEFFQIDSENEALLAALTKTLDDIPEDDVGLAAFPGLDEGDTPSCTPASPAPLSVPPSPALERLLSPVSEVDELSLLQKLLLATSSPTASSDALKDGATWSQTSLSSRSQRPCVKVDGTQDKKTPMLRSQSRPCTELHKHLTSVLPCPRGKACSPPPHPSPQLLSKEDEEVGEDCPSPWPAPASPQDSLGQDTANPNSAQVPKDDVRAMVQLIRYMHTYCLPQRKLPQRASEPIPQSCSSPLRKVPPRSRQTPKAFWTEFSILRELLAQDILCDVSKPYRLATPVYASLTPQSRTRPPKDSQASPAHSAMAEEVRITASPKSTGPRPSLRPLRLEVKRDVNKPARQKREEDEEEEEEEEEEEEKEDEEEEWGRKRPGRGLPWTKLGRKMDSSVCPVRRSRRLNPELGPWLTFTDEPLGALPSMCLATETHDLEEELGGLTDSSQGQQLPLGSQIPTLESPCESGCGDTDEDPSCPRPPSRDSPRCLMLALSQSDPLGKKSFEESLTVELCGTAGLTPPTTPPYKPMEEDPFKQDTKHSPGQDTAPSLPSPETLQLTATPGASHKLPKRHPERSELLSHLQHATTQPVSQAGQKRPFSCSFGDHDYCQVIRPEAALQRKVLRSWEPIKVHLEDLAHQGATLPVETKTPRREADQNCDPTPKDSMQLRDHEIRASLTKHFGLLETALEEEDLASCKSPEYDTVFEDSSSSSGESSFLLEEEEEEGGEEDDEGEDSGVSPPCSDHCPYQSPPSKASRQLCSRSRSSSGSSSCSSWSPATRKNFRLESRGPCSDGTPSARHAKKRREKAIGEGRVVYIRNLSGDMSSRELKKRFEVFGEIVECQVLRRSKRGQKHGFITFRCSEHAALSVRNGATLRKRNEPSFHLSYGGLRHFRWPRYTDYDPTSEESLPSSGKSKYEAMDFDSLLKEAQQSLH.

An abolishes DNA transcriptional activity when missing region spans residues 1-91 (MAGNDCGALL…FFQIDSENEA (91 aa)). The disordered stretch occupies residues 115 to 134 (GLDEGDTPSCTPASPAPLSV). The LXXLL motif 1 signature appears at 140 to 144 (LERLL). Phosphoserine is present on residues Ser145 and Ser148. The LXXLL motif 2 signature appears at 156 to 160 (LQKLL). Disordered regions lie at residues 165-214 (SPTA…RPCT), 227-282 (PRGK…QVPK), and 306-329 (PQRA…PRSR). 2 stretches are compositionally biased toward polar residues: residues 178 to 189 (TWSQTSLSSRSQ) and 264 to 279 (PQDS…NSAQ). The LXXLL motif 3 signature appears at 342–346 (LRELL). Residues 369 to 384 (TPQSRTRPPKDSQASP) are compositionally biased toward polar residues. Disordered stretches follow at residues 369–475 (TPQS…VCPV), 517–567 (GLTD…CLML), and 590–674 (GTAG…QKRP). Position 383 is a phosphoserine (Ser383). The segment covering 411–428 (LRLEVKRDVNKPARQKRE) has biased composition (basic and acidic residues). Over residues 429–449 (EDEEEEEEEEEEEEKEDEEEE) the composition is skewed to acidic residues. The span at 521-532 (SSQGQQLPLGSQ) shows a compositional bias: low complexity. The span at 604–618 (PMEEDPFKQDTKHSP) shows a compositional bias: basic and acidic residues. 2 stretches are compositionally biased toward polar residues: residues 619 to 638 (GQDT…TATP) and 659 to 670 (QHATTQPVSQAG). Ser628 is modified (phosphoserine). The short motif at 681 to 684 (DHDY) is the HCFC1-binding-motif (HBM) element. Disordered regions lie at residues 714–744 (HQGA…SMQL) and 778–881 (DTVF…KKRR). Positions 782–794 (EDSSSSSGESSFL) are enriched in low complexity. Residues 795–811 (LEEEEEEGGEEDDEGED) show a composition bias toward acidic residues. Low complexity predominate over residues 832–852 (SRQLCSRSRSSSGSSSCSSWS). One can recognise an RRM domain in the interval 889–963 (RVVYIRNLSG…RNEPSFHLSY (75 aa)).

As to quaternary structure, interacts with estrogen receptor alpha/ESR1. Interacts with Sterol regulatory binding transcription factor 1/SREBF1, PPAR-alpha/PPARA, thyroid hormone receptor beta/THRB and host cell factor/HCFC1. Interacts with Estrogen-related receptor gamma/ESRRG and alpha/ESRRA. Interacts with PRDM16. In terms of tissue distribution, ubiquitous with higher expression in heart, brown adipose tissue.

Its subcellular location is the nucleus. Plays a role of stimulator of transcription factors and nuclear receptors activities. Activates transcriptional activity of estrogen receptor alpha, nuclear respiratory factor 1 (NRF1) and glucocorticoid receptor in the presence of glucocorticoids. May play a role in constitutive non-adrenergic-mediated mitochondrial biogenesis as suggested by increased basal oxygen consumption and mitochondrial number when overexpressed. May be part of the pathways regulating the elevation of gluconeogenesis, beta-oxidation of fatty acids and ketogenesis during fasting. Stimulates SREBP-mediated lipogenic gene expression in the liver. Induces energy expenditure and antagonizes obesity when overexpressed. Also induces the expression of mitochondrial genes involved in oxidative metabolism. Induces the expression of PERM1 in the skeletal muscle in an ESRRA-dependent manner. The chain is Peroxisome proliferator-activated receptor gamma coactivator 1-beta (Ppargc1b) from Rattus norvegicus (Rat).